Reading from the N-terminus, the 857-residue chain is Envelope glycoprotein B (857 aa).

A signal peptide spans 1–21 (MTRRRVLSVVVLLAALACRLG). The Virion surface segment spans residues 22–732 (AQTPEQPAPP…SGFISFFKNP (711 aa)). Intrachain disulfides connect cysteine 51–cysteine 528, cysteine 68–cysteine 484, cysteine 141–cysteine 206, cysteine 295–cysteine 342, and cysteine 551–cysteine 588. N-linked (GlcNAc...) asparagine; by host glycosylation occurs at asparagine 76. Positions 108 to 114 (IYNGWYA) are involved in fusion and/or binding to host membrane. N-linked (GlcNAc...) asparagine; by host glycosylation is present at asparagine 163. Residues 192–200 (GWLIWTYRT) form an involved in fusion and/or binding to host membrane region. 4 N-linked (GlcNAc...) asparagine; by host glycosylation sites follow: asparagine 290, asparagine 329, asparagine 348, and asparagine 395. The interval 398–452 (ELTTPTSSPPSSPSPPAPPAARGSTSAAVLRRRRRDAGNATTPVPPAAPGKSLGT) is disordered. The span at 404–416 (SSPPSSPSPPAPP) shows a compositional bias: pro residues. Asparagine 436, asparagine 563, and asparagine 629 each carry an N-linked (GlcNAc...) asparagine; by host glycan. Hydrophobic membrane proximal region regions lie at residues 678–730 (LDNA…SFFK) and 709–729 (NLVS…ISFF). The helical transmembrane segment at 733-753 (FGGMLILVLVAGVVILVISLT) threads the bilayer. Topologically, residues 754–857 (RRTRQMSQQP…ALLGEAETEF (104 aa)) are intravirion. The tract at residues 832 to 857 (FPGLRRRRYHDPETAAALLGEAETEF) is disordered. Residues 845–857 (TAAALLGEAETEF) show a composition bias toward low complexity.

Belongs to the herpesviridae glycoprotein B family. As to quaternary structure, homotrimer; disulfide-linked. Binds to heparan sulfate proteoglycans. Interacts with gH/gL heterodimer. In terms of processing, a proteolytic cleavage by host furin generates two subunits that remain linked by disulfide bonds.

Its subcellular location is the virion membrane. The protein localises to the host cell membrane. It localises to the host endosome membrane. The protein resides in the host Golgi apparatus membrane. Its function is as follows. Envelope glycoprotein that forms spikes at the surface of virion envelope. Essential for the initial attachment to heparan sulfate moieties of the host cell surface proteoglycans. Involved in fusion of viral and cellular membranes leading to virus entry into the host cell. Following initial binding to its host receptors, membrane fusion is mediated by the fusion machinery composed at least of gB and the heterodimer gH/gL. May be involved in the fusion between the virion envelope and the outer nuclear membrane during virion egress. The sequence is that of Envelope glycoprotein B from Epstein-Barr virus (strain GD1) (HHV-4).